A 461-amino-acid polypeptide reads, in one-letter code: Vimentin (461 aa).

2 stretches are compositionally biased toward low complexity: residues 1–14 (MNRT…SSSS) and 35–52 (SSRQ…SYSV). Positions 1 to 52 (MNRTTSRQTTSSSSYKRMFGGEGRPSVGMARSTLSSRQYSSPVRSSRMSYSV) are disordered. Residues 1 to 91 (MNRTTSRQTT…FALSDAINSE (91 aa)) form a head region. The coil 1A stretch occupies residues 92-127 (FKANRTNEKAEMQHLNDRFASYIDKVRFLEQQNKIL). Residues 92–127 (FKANRTNEKAEMQHLNDRFASYIDKVRFLEQQNKIL) are a coiled coil. The 309-residue stretch at 99 to 407 (EKAEMQHLND…KLLEGEESRI (309 aa)) folds into the IF rod domain. The interval 128–149 (LAELEQLKGKGASRIGDLYEDE) is linker 1. Positions 150-241 (MRDLRRQVDQ…KLHDEEVAEL (92 aa)) form a coiled coil. The tract at residues 150-241 (MRDLRRQVDQ…KLHDEEVAEL (92 aa)) is coil 1B. The linker 12 stretch occupies residues 242 to 264 (QAQIQDQHVQIDMDVAKPDLTAA). The coil 2 stretch occupies residues 265–403 (LRDVRVQYET…ATYRKLLEGE (139 aa)). The stretch at 299-403 (NRNTDAIRQA…ATYRKLLEGE (105 aa)) forms a coiled coil. The segment at 404–461 (ESRITTPMPNFSSFNLRESMLEARPMIDNLSKKVVIKTIETRDGHVINESTQNHDDLE) is tail.

It belongs to the intermediate filament family. As to quaternary structure, homomer assembled from elementary dimers. One of the most prominent phosphoproteins in various cells of mesenchymal origin. Phosphorylation is enhanced during cell division, at which time vimentin filaments are significantly reorganized.

The protein resides in the cytoplasm. It localises to the cytoskeleton. Its subcellular location is the nucleus matrix. Functionally, vimentins are class-III intermediate filaments found in various non-epithelial cells, especially mesenchymal cells. Vimentin is attached to the nucleus, endoplasmic reticulum, and mitochondria, either laterally or terminally. This chain is Vimentin (vim), found in Oncorhynchus mykiss (Rainbow trout).